The primary structure comprises 338 residues: Aspartate--ammonia ligase (338 aa).

It belongs to the class-II aminoacyl-tRNA synthetase family. AsnA subfamily.

The protein resides in the cytoplasm. The catalysed reaction is L-aspartate + NH4(+) + ATP = L-asparagine + AMP + diphosphate + H(+). It participates in amino-acid biosynthesis; L-asparagine biosynthesis; L-asparagine from L-aspartate (ammonia route): step 1/1. This is Aspartate--ammonia ligase from Lactobacillus delbrueckii subsp. bulgaricus (strain ATCC BAA-365 / Lb-18).